Reading from the N-terminus, the 161-residue chain is Lipoprotein signal peptidase (161 aa).

3 helical membrane-spanning segments follow: residues 4–24, 61–81, and 87–107; these read LLVV…WSKY, KMIF…YLLI, and SIWY…NFID. Catalysis depends on residues D116 and D132. A helical membrane pass occupies residues 127–147; that stretch reads IFNVADSTLVVGVICIFIYLI.

Belongs to the peptidase A8 family.

It localises to the cell membrane. The catalysed reaction is Release of signal peptides from bacterial membrane prolipoproteins. Hydrolyzes -Xaa-Yaa-Zaa-|-(S,diacylglyceryl)Cys-, in which Xaa is hydrophobic (preferably Leu), and Yaa (Ala or Ser) and Zaa (Gly or Ala) have small, neutral side chains.. It functions in the pathway protein modification; lipoprotein biosynthesis (signal peptide cleavage). This protein specifically catalyzes the removal of signal peptides from prolipoproteins. The polypeptide is Lipoprotein signal peptidase (Enterococcus faecalis (strain ATCC 700802 / V583)).